The sequence spans 239 residues: tRNA (guanine-N(1)-)-methyltransferase (239 aa).

S-adenosyl-L-methionine contacts are provided by residues Gly-109 and 128–133; that span reads IGDYVL.

It belongs to the RNA methyltransferase TrmD family. Homodimer.

Its subcellular location is the cytoplasm. The enzyme catalyses guanosine(37) in tRNA + S-adenosyl-L-methionine = N(1)-methylguanosine(37) in tRNA + S-adenosyl-L-homocysteine + H(+). Its function is as follows. Specifically methylates guanosine-37 in various tRNAs. The sequence is that of tRNA (guanine-N(1)-)-methyltransferase from Thermus thermophilus (strain ATCC 27634 / DSM 579 / HB8).